The chain runs to 566 residues: Urease subunit alpha (566 aa).

In terms of domain architecture, Urease spans 129–566 (GGVDTHIHFI…LPLAQRYFLF (438 aa)). Ni(2+)-binding residues include His134, His136, and Lys217. Lys217 carries the post-translational modification N6-carboxylysine. His219 is a binding site for substrate. The Ni(2+) site is built by His246 and His272. The active-site Proton donor is His320. Position 360 (Asp360) interacts with Ni(2+).

It belongs to the metallo-dependent hydrolases superfamily. Urease alpha subunit family. Heterotrimer of UreA (gamma), UreB (beta) and UreC (alpha) subunits. Three heterotrimers associate to form the active enzyme. Ni cation is required as a cofactor. Carboxylation allows a single lysine to coordinate two nickel ions.

The protein localises to the cytoplasm. It carries out the reaction urea + 2 H2O + H(+) = hydrogencarbonate + 2 NH4(+). Its pathway is nitrogen metabolism; urea degradation; CO(2) and NH(3) from urea (urease route): step 1/1. In Janthinobacterium sp. (strain Marseille) (Minibacterium massiliensis), this protein is Urease subunit alpha.